Reading from the N-terminus, the 159-residue chain is Protein-export protein SecB (159 aa).

It belongs to the SecB family. As to quaternary structure, homotetramer, a dimer of dimers. One homotetramer interacts with 1 SecA dimer.

The protein resides in the cytoplasm. In terms of biological role, one of the proteins required for the normal export of preproteins out of the cell cytoplasm. It is a molecular chaperone that binds to a subset of precursor proteins, maintaining them in a translocation-competent state. It also specifically binds to its receptor SecA. This chain is Protein-export protein SecB, found in Rhizobium etli (strain CIAT 652).